The sequence spans 399 residues: Serine/threonine transporter SstT (399 aa).

The next 9 membrane-spanning stretches (helical) occupy residues leucine 8–phenylalanine 28, isoleucine 37–leucine 57, isoleucine 77–leucine 97, proline 134–glycine 154, valine 178–phenylalanine 198, leucine 212–valine 232, valine 284–leucine 304, leucine 312–alanine 332, and valine 348–isoleucine 370.

Belongs to the dicarboxylate/amino acid:cation symporter (DAACS) (TC 2.A.23) family.

The protein resides in the cell inner membrane. The catalysed reaction is L-serine(in) + Na(+)(in) = L-serine(out) + Na(+)(out). The enzyme catalyses L-threonine(in) + Na(+)(in) = L-threonine(out) + Na(+)(out). In terms of biological role, involved in the import of serine and threonine into the cell, with the concomitant import of sodium (symport system). This Acinetobacter baylyi (strain ATCC 33305 / BD413 / ADP1) protein is Serine/threonine transporter SstT.